Here is a 393-residue protein sequence, read N- to C-terminus: Riboflavin biosynthesis protein RibBA (393 aa).

Residues Met1–Ala200 form a DHBP synthase region. D-ribulose 5-phosphate-binding positions include Arg27 to Glu28, Asp32, Arg139 to Thr143, and Glu163. A Mg(2+)-binding site is contributed by Glu28. Mg(2+) is bound at residue His142. The tract at residues Val201–Ile393 is GTP cyclohydrolase II. A GTP-binding site is contributed by Arg249 to Ala253. 3 residues coordinate Zn(2+): Cys254, Cys265, and Cys267. Residues Gln270, Glu291–Arg293, and Thr313 each bind GTP. Asp325 serves as the catalytic Proton acceptor; for GTP cyclohydrolase activity. The Nucleophile; for GTP cyclohydrolase activity role is filled by Arg327. Ser348 and Lys353 together coordinate GTP.

The protein in the N-terminal section; belongs to the DHBP synthase family. This sequence in the C-terminal section; belongs to the GTP cyclohydrolase II family. The cofactor is Mg(2+). Mn(2+) serves as cofactor. Requires Zn(2+) as cofactor.

It catalyses the reaction D-ribulose 5-phosphate = (2S)-2-hydroxy-3-oxobutyl phosphate + formate + H(+). The enzyme catalyses GTP + 4 H2O = 2,5-diamino-6-hydroxy-4-(5-phosphoribosylamino)-pyrimidine + formate + 2 phosphate + 3 H(+). The protein operates within cofactor biosynthesis; riboflavin biosynthesis; 2-hydroxy-3-oxobutyl phosphate from D-ribulose 5-phosphate: step 1/1. It participates in cofactor biosynthesis; riboflavin biosynthesis; 5-amino-6-(D-ribitylamino)uracil from GTP: step 1/4. Functionally, catalyzes the conversion of D-ribulose 5-phosphate to formate and 3,4-dihydroxy-2-butanone 4-phosphate. Its function is as follows. Catalyzes the conversion of GTP to 2,5-diamino-6-ribosylamino-4(3H)-pyrimidinone 5'-phosphate (DARP), formate and pyrophosphate. The sequence is that of Riboflavin biosynthesis protein RibBA from Staphylococcus epidermidis (strain ATCC 12228 / FDA PCI 1200).